We begin with the raw amino-acid sequence, 149 residues long: Myoglobin (149 aa).

Residue Thr2 is modified to N-acetylthreonine. The region spanning Thr2–Lys143 is the Globin domain. Residue His60 participates in nitrite binding. His60 is a binding site for O2. A heme b-binding site is contributed by His89.

It belongs to the globin family. As to quaternary structure, monomeric.

The protein resides in the cytoplasm. The protein localises to the sarcoplasm. It catalyses the reaction Fe(III)-heme b-[protein] + nitric oxide + H2O = Fe(II)-heme b-[protein] + nitrite + 2 H(+). The enzyme catalyses H2O2 + AH2 = A + 2 H2O. Functionally, monomeric heme protein which primary function is to store oxygen and facilitate its diffusion within muscle tissues. Reversibly binds oxygen through a pentacoordinated heme iron and enables its timely and efficient release as needed during periods of heightened demand. Depending on the oxidative conditions of tissues and cells, and in addition to its ability to bind oxygen, it also has a nitrite reductase activity whereby it regulates the production of bioactive nitric oxide. Under stress conditions, like hypoxia and anoxia, it also protects cells against reactive oxygen species thanks to its pseudoperoxidase activity. In Heterodontus portusjacksoni (Port Jackson shark), this protein is Myoglobin (mb).